Reading from the N-terminus, the 184-residue chain is MADQLTDDQISEFKEAFSLFDKDGDGCITTKELGTVMRSLGQNPTEAELQDMINEVDADGNGTIDFPEFLNLMARKMKDTDSEEELKEAFRVFDKDQNGFISAAELRHVMTNLGEKLTDEEVDEMIREADVDGDGQINYEEFVKVMMANRRRRRIEESKRSVNSNISRSNNGRKVRKRDRCTIL.

EF-hand domains lie at 8–43 (DQIS…LGQN), 44–79 (PTEA…KMKD), 81–116 (DSEE…LGEK), and 117–152 (LTDE…NRRR). Positions 21, 23, 25, 27, 32, 57, 59, 61, 63, 68, 94, 96, 98, and 105 each coordinate Ca(2+). Position 116 is an N6,N6,N6-trimethyllysine (Lys116). Ca(2+) is bound by residues Asp130, Asp132, Asp134, Gln136, and Glu141. Positions 156–184 (EESKRSVNSNISRSNNGRKVRKRDRCTIL) are disordered. Low complexity predominate over residues 161–170 (SVNSNISRSN). Basic residues predominate over residues 171-184 (NGRKVRKRDRCTIL).

It belongs to the calmodulin family.

Its function is as follows. Calmodulin mediates the control of a large number of enzymes, ion channels and other proteins by Ca(2+). Among the enzymes to be stimulated by the calmodulin-Ca(2+) complex are a number of protein kinases and phosphatases. The polypeptide is Calmodulin-related protein (CAM53) (Petunia hybrida (Petunia)).